Consider the following 149-residue polypeptide: SsrA-binding protein (149 aa).

The tract at residues 121-149 (GKKQHDKRAAEKDREWQREKQRLVRSAQH) is disordered. Over residues 127–142 (KRAAEKDREWQREKQR) the composition is skewed to basic and acidic residues.

This sequence belongs to the SmpB family.

The protein localises to the cytoplasm. Functionally, required for rescue of stalled ribosomes mediated by trans-translation. Binds to transfer-messenger RNA (tmRNA), required for stable association of tmRNA with ribosomes. tmRNA and SmpB together mimic tRNA shape, replacing the anticodon stem-loop with SmpB. tmRNA is encoded by the ssrA gene; the 2 termini fold to resemble tRNA(Ala) and it encodes a 'tag peptide', a short internal open reading frame. During trans-translation Ala-aminoacylated tmRNA acts like a tRNA, entering the A-site of stalled ribosomes, displacing the stalled mRNA. The ribosome then switches to translate the ORF on the tmRNA; the nascent peptide is terminated with the 'tag peptide' encoded by the tmRNA and targeted for degradation. The ribosome is freed to recommence translation, which seems to be the essential function of trans-translation. The protein is SsrA-binding protein of Thiobacillus denitrificans (strain ATCC 25259 / T1).